The following is a 198-amino-acid chain: Recombination protein RecR (198 aa).

The C4-type zinc-finger motif lies at 57-72; it reads CSICGNLTESDPCAIC. One can recognise a Toprim domain in the interval 80–175; the sequence is TTILVVEESK…KVTRLARGLA (96 aa).

This sequence belongs to the RecR family.

Its function is as follows. May play a role in DNA repair. It seems to be involved in an RecBC-independent recombinational process of DNA repair. It may act with RecF and RecO. The sequence is that of Recombination protein RecR from Lactococcus lactis subsp. cremoris (strain MG1363).